Here is a 389-residue protein sequence, read N- to C-terminus: Cytochrome f (389 aa).

Residues 1–42 form the signal peptide; sequence MTTFFISKVNGPVNKSLIWLKIHIYEFFLLKFMLLFPPTVCS. Tyr-105, Cys-125, Cys-128, and His-129 together coordinate heme. The chain crosses the membrane as a helical span at residues 355 to 375; it reads LQALIVFFIFVILTQLFLVLK.

This sequence belongs to the cytochrome f family. As to quaternary structure, the 4 large subunits of the cytochrome b6-f complex are cytochrome b6, subunit IV (17 kDa polypeptide, petD), cytochrome f and the Rieske protein, while the 4 small subunits are PetG, PetL, PetM and PetN. The complex functions as a dimer. Heme is required as a cofactor.

It localises to the plastid. The protein localises to the chloroplast thylakoid membrane. Functionally, component of the cytochrome b6-f complex, which mediates electron transfer between photosystem II (PSII) and photosystem I (PSI), cyclic electron flow around PSI, and state transitions. The protein is Cytochrome f of Pleurastrum terricola (Filamentous green alga).